Consider the following 100-residue polypeptide: Small ribosomal subunit protein uS14c (100 aa).

The protein belongs to the universal ribosomal protein uS14 family. In terms of assembly, part of the 30S ribosomal subunit.

The protein resides in the plastid. It is found in the chloroplast. Its function is as follows. Binds 16S rRNA, required for the assembly of 30S particles. This Eucalyptus globulus subsp. globulus (Tasmanian blue gum) protein is Small ribosomal subunit protein uS14c.